The sequence spans 89 residues: Acylphosphatase (89 aa).

Residues 3-89 (RKEFLVSGRV…DTREKRFSTY (87 aa)) form the Acylphosphatase-like domain. Residues Arg18 and Asn36 contribute to the active site.

The protein belongs to the acylphosphatase family.

It carries out the reaction an acyl phosphate + H2O = a carboxylate + phosphate + H(+). The polypeptide is Acylphosphatase (acyP) (Clostridium perfringens (strain ATCC 13124 / DSM 756 / JCM 1290 / NCIMB 6125 / NCTC 8237 / Type A)).